A 513-amino-acid chain; its full sequence is ATP synthase subunit alpha (513 aa).

Residue 169-176 coordinates ATP; that stretch reads GDRQTGKT.

The protein belongs to the ATPase alpha/beta chains family. F-type ATPases have 2 components, CF(1) - the catalytic core - and CF(0) - the membrane proton channel. CF(1) has five subunits: alpha(3), beta(3), gamma(1), delta(1), epsilon(1). CF(0) has three main subunits: a(1), b(2) and c(9-12). The alpha and beta chains form an alternating ring which encloses part of the gamma chain. CF(1) is attached to CF(0) by a central stalk formed by the gamma and epsilon chains, while a peripheral stalk is formed by the delta and b chains.

The protein resides in the cell inner membrane. The enzyme catalyses ATP + H2O + 4 H(+)(in) = ADP + phosphate + 5 H(+)(out). Produces ATP from ADP in the presence of a proton gradient across the membrane. The alpha chain is a regulatory subunit. The chain is ATP synthase subunit alpha from Shewanella sp. (strain MR-4).